A 486-amino-acid chain; its full sequence is UDP-N-acetylmuramate--L-alanine ligase (486 aa).

126–132 (GTHGKTS) contacts ATP.

It belongs to the MurCDEF family.

The protein localises to the cytoplasm. The enzyme catalyses UDP-N-acetyl-alpha-D-muramate + L-alanine + ATP = UDP-N-acetyl-alpha-D-muramoyl-L-alanine + ADP + phosphate + H(+). The protein operates within cell wall biogenesis; peptidoglycan biosynthesis. Functionally, cell wall formation. The protein is UDP-N-acetylmuramate--L-alanine ligase of Buchnera aphidicola subsp. Baizongia pistaciae (strain Bp).